The chain runs to 267 residues: uncharacterized protein (267 aa).

To S.pombe SpAC18G6.12c.

This is an uncharacterized protein from Schizosaccharomyces pombe (strain 972 / ATCC 24843) (Fission yeast).